The following is a 161-amino-acid chain: RNA pyrophosphohydrolase (161 aa).

Positions 6–149 (GFRPNVGIIL…KRDVYRKAMV (144 aa)) constitute a Nudix hydrolase domain. The short motif at 38-59 (GGIQFGETPEQALFRELREEIG) is the Nudix box element.

It belongs to the Nudix hydrolase family. RppH subfamily. It depends on a divalent metal cation as a cofactor.

Functionally, accelerates the degradation of transcripts by removing pyrophosphate from the 5'-end of triphosphorylated RNA, leading to a more labile monophosphorylated state that can stimulate subsequent ribonuclease cleavage. The chain is RNA pyrophosphohydrolase from Acinetobacter baumannii (strain AB307-0294).